Here is a 391-residue protein sequence, read N- to C-terminus: Terminal nucleotidyltransferase 5C (391 aa).

Belongs to the TENT family. Interacts with BCCIP and PABPC1; the interaction has no effect on TENT5C poly(A) polymerase function. Interacts with PLK4; this interaction leads to the TENT5C recruitment into the centrosome.

The protein localises to the nucleus. It is found in the cytoplasm. It localises to the cytoskeleton. The protein resides in the microtubule organizing center. Its subcellular location is the centrosome. It catalyses the reaction RNA(n) + ATP = RNA(n)-3'-adenine ribonucleotide + diphosphate. Its function is as follows. Catalyzes the transfer of one adenosine molecule from an ATP to an mRNA poly(A) tail bearing a 3'-OH terminal group and enhances mRNA stability and gene expression. Can also elongate RNA oligos ending with uridine molecule, provided that the sequence is adenosine-rich. Mainly targets mRNAs encoding endoplasmic reticulum-targeted protein. This Macaca fascicularis (Crab-eating macaque) protein is Terminal nucleotidyltransferase 5C.